Consider the following 380-residue polypeptide: Kappa-type opioid receptor (380 aa).

The Extracellular segment spans residues 1–57 (MESPIQIFRGDPGPTCSPSACLLPNSSSWFPNWAESDSNGSVGSEDQQLESAHISPA). N-linked (GlcNAc...) asparagine glycosylation is found at N25 and N39. The chain crosses the membrane as a helical span at residues 58 to 85 (IPVIITAVYSVVFVVGLVGNSLVMFVII). Over 86-95 (RYTKMKTATN) the chain is Cytoplasmic. Residues 96–119 (IYIFNLALADALVTTTMPFQSAVY) form a helical membrane-spanning segment. Over 120-132 (LMNSWPFGDVLCK) the chain is Extracellular. An intrachain disulfide couples C131 to C210. Residues 133–154 (IVISIDYYNMFTSIFTLTMMSV) form a helical membrane-spanning segment. Residues 155–173 (DRYIAVCHPVKALDFRTPL) are Cytoplasmic-facing. Residues 174–196 (KAKIINICIWLLASSVGISAIVL) form a helical membrane-spanning segment. At 197-222 (GGTKVREDVDVIECSLQFPDDEYSWW) the chain is on the extracellular side. The helical transmembrane segment at 223-247 (DLFMKICVFVFAFVIPVLIIIVCYT) threads the bilayer. Topologically, residues 248–274 (LMILRLKSVRLLSGSREKDRNLRRITK) are cytoplasmic. A helical membrane pass occupies residues 275-296 (LVLVVVAVFIICWTPIHIFILV). The Extracellular portion of the chain corresponds to 297 to 311 (EALGSTSHSTAALSS). A helical membrane pass occupies residues 312-333 (YYFCIALGYTNSSLNPVLYAFL). Over 334-380 (DENFKRCFRDFCFPIKMRMERQSTNRVRNTVQDPASMRDVGGMNKPV) the chain is Cytoplasmic. A lipid anchor (S-palmitoyl cysteine) is attached at C345.

It belongs to the G-protein coupled receptor 1 family. As to quaternary structure, interacts with NHERF1. Interacts with GABARAPL1. In terms of tissue distribution, detected in brain (at protein level). Brain (neocortex, hippocampus, amygdala, medial habenula, hypothalamus, locus ceruleus, and parabrachial nucleus).

It localises to the cell membrane. Functionally, G-protein coupled opioid receptor that functions as a receptor for endogenous alpha-neoendorphins and dynorphins, but has low affinity for beta-endorphins. Also functions as a receptor for various synthetic opioids and for the psychoactive diterpene salvinorin A. Ligand binding causes a conformation change that triggers signaling via guanine nucleotide-binding proteins (G proteins) and modulates the activity of down-stream effectors, such as adenylate cyclase. Signaling leads to the inhibition of adenylate cyclase activity. Inhibits neurotransmitter release by reducing calcium ion currents and increasing potassium ion conductance. Plays a role in the perception of pain. Plays a role in mediating reduced physical activity upon treatment with synthetic opioids. Plays a role in the regulation of salivation in response to synthetic opioids. May play a role in arousal and regulation of autonomic and neuroendocrine functions. The sequence is that of Kappa-type opioid receptor (Oprk1) from Mus musculus (Mouse).